The chain runs to 499 residues: Dipeptide and tripeptide permease A (499 aa).

At 1–34 the chain is on the cytoplasmic side; sequence MSTANKKPAESVSMNAFKQPRSFYLIFSIELWER. A helical membrane pass occupies residues 35 to 55; that stretch reads FGFYGLQGIMAVYLVKQLGMS. Residues 56 to 59 are Periplasmic-facing; the sequence is EADS. Residues 60–80 traverse the membrane as a helical segment; it reads ITLFSSFSALVYGLVAIGGWL. Over 81–89 the chain is Cytoplasmic; the sequence is GDKVLGTKR. A helical membrane pass occupies residues 90–110; that stretch reads VIMLGTIVLAIGYALVAWSGH. Asp111 is a topological domain (periplasmic). A helical membrane pass occupies residues 112–132; the sequence is AAIVYFGMATIAVGNGLFKAN. Residues 133-153 lie on the Cytoplasmic side of the membrane; that stretch reads PSALLSTCYEKDDPRLDGAFT. Residues 154–174 form a helical membrane-spanning segment; that stretch reads MYYMAINIGSFFSMLATPWLA. At 175 to 178 the chain is on the periplasmic side; sequence EKFG. Residues 179 to 199 form a helical membrane-spanning segment; the sequence is WSVAFSLSFVGMLITLVNFIF. The Cytoplasmic segment spans residues 200–217; sequence CKKWVKDYGSKPDFAPLH. Residues 218-238 form a helical membrane-spanning segment; it reads VGKLLATIVGIVVLVAIATWL. Over 239-246 the chain is Periplasmic; sequence LHNQGIAR. Residues 247-267 form a helical membrane-spanning segment; the sequence is LVLGVVALGIVIIFAKEAFAM. At 268 to 274 the chain is on the cytoplasmic side; that stretch reads QGAARRK. Residues 275–295 traverse the membrane as a helical segment; that stretch reads MIVAFILMLEAIVFFVLYQQM. The Periplasmic segment spans residues 296–320; sequence PTSLNFFAIRNVEHSILGIAFQPEQ. The helical transmembrane segment at 321–341 threads the bilayer; it reads FQALNPFWIMIGSPILAAIYN. At 342–350 the chain is on the cytoplasmic side; that stretch reads KMGDRLPMP. The chain crosses the membrane as a helical span at residues 351 to 371; sequence FKFTIGMLLCSGAFLVLPLGA. Residues 372 to 383 are Periplasmic-facing; the sequence is KFASEAGIVSVN. The helical transmembrane segment at 384-404 threads the bilayer; sequence WLILSYALQSIGELMISGLGL. The Cytoplasmic portion of the chain corresponds to 405–414; it reads AMVAQLVPQR. A helical transmembrane segment spans residues 415–435; it reads LMGFIMGSWFLTTAGAAMIAG. Topologically, residues 436–459 are periplasmic; the sequence is KVANLMAVPENVSDPLQSLEVYGR. The helical transmembrane segment at 460-480 threads the bilayer; that stretch reads VFMQIGIATGVIAVLMLLTAP. Over 481 to 499 the chain is Cytoplasmic; it reads LLNRMTQEDKPKETDTAHA.

This sequence belongs to the major facilitator superfamily. Proton-dependent oligopeptide transporter (POT/PTR) (TC 2.A.17) family. DtpA subfamily.

Its subcellular location is the cell inner membrane. In terms of biological role, proton-dependent permease that transports di- and tripeptides. In Cronobacter turicensis (strain DSM 18703 / CCUG 55852 / LMG 23827 / z3032), this protein is Dipeptide and tripeptide permease A.